Consider the following 610-residue polypeptide: Elongation factor 4 (610 aa).

Residues 11–193 enclose the tr-type G domain; sequence EKIRNFSIIA…QIVEKVPAPT (183 aa). Residues 23–28 and 140–143 contribute to the GTP site; these read DHGKST and NKID.

This sequence belongs to the TRAFAC class translation factor GTPase superfamily. Classic translation factor GTPase family. LepA subfamily.

The protein resides in the cell membrane. The catalysed reaction is GTP + H2O = GDP + phosphate + H(+). Functionally, required for accurate and efficient protein synthesis under certain stress conditions. May act as a fidelity factor of the translation reaction, by catalyzing a one-codon backward translocation of tRNAs on improperly translocated ribosomes. Back-translocation proceeds from a post-translocation (POST) complex to a pre-translocation (PRE) complex, thus giving elongation factor G a second chance to translocate the tRNAs correctly. Binds to ribosomes in a GTP-dependent manner. This is Elongation factor 4 from Streptococcus pyogenes serotype M6 (strain ATCC BAA-946 / MGAS10394).